Here is a 144-residue protein sequence, read N- to C-terminus: Large ribosomal subunit protein uL13 (144 aa).

It belongs to the universal ribosomal protein uL13 family. As to quaternary structure, part of the 50S ribosomal subunit.

Its function is as follows. This protein is one of the early assembly proteins of the 50S ribosomal subunit, although it is not seen to bind rRNA by itself. It is important during the early stages of 50S assembly. The protein is Large ribosomal subunit protein uL13 of Buchnera aphidicola subsp. Baizongia pistaciae (strain Bp).